Reading from the N-terminus, the 157-residue chain is 2-C-methyl-D-erythritol 2,4-cyclodiphosphate synthase (157 aa).

Positions 8 and 10 each coordinate a divalent metal cation. 4-CDP-2-C-methyl-D-erythritol 2-phosphate-binding positions include 8 to 10 and 34 to 35; these read DVH and HS. His42 provides a ligand contact to a divalent metal cation. 4-CDP-2-C-methyl-D-erythritol 2-phosphate contacts are provided by residues 56 to 58, 132 to 135, Phe139, and Arg142; these read DIG and TTNE.

It belongs to the IspF family. In terms of assembly, homotrimer. It depends on a divalent metal cation as a cofactor.

The enzyme catalyses 4-CDP-2-C-methyl-D-erythritol 2-phosphate = 2-C-methyl-D-erythritol 2,4-cyclic diphosphate + CMP. Its pathway is isoprenoid biosynthesis; isopentenyl diphosphate biosynthesis via DXP pathway; isopentenyl diphosphate from 1-deoxy-D-xylulose 5-phosphate: step 4/6. In terms of biological role, involved in the biosynthesis of isopentenyl diphosphate (IPP) and dimethylallyl diphosphate (DMAPP), two major building blocks of isoprenoid compounds. Catalyzes the conversion of 4-diphosphocytidyl-2-C-methyl-D-erythritol 2-phosphate (CDP-ME2P) to 2-C-methyl-D-erythritol 2,4-cyclodiphosphate (ME-CPP) with a corresponding release of cytidine 5-monophosphate (CMP). This is 2-C-methyl-D-erythritol 2,4-cyclodiphosphate synthase from Symbiobacterium thermophilum (strain DSM 24528 / JCM 14929 / IAM 14863 / T).